The chain runs to 313 residues: Olfactory receptor 1M1 (313 aa).

Over 1 to 25 (MEPRNQTSASQFILLGLSEKPEQET) the chain is Extracellular. N5 is a glycosylation site (N-linked (GlcNAc...) asparagine). Residues 26 to 49 (LLFSLFFCMYLVMVVGNLLIILAI) form a helical membrane-spanning segment. Topologically, residues 50–57 (SIDSHLHT) are cytoplasmic. Residues 58–79 (PMYFFLANLSLVDFCLATNTIP) traverse the membrane as a helical segment. Residues 80 to 100 (KMLVSLQTGSKAISYPCCLIQ) lie on the Extracellular side of the membrane. A disulfide bridge links C97 with C189. Residues 101–120 (MYFFHFFGIVDSVIIAMMAY) traverse the membrane as a helical segment. The Cytoplasmic portion of the chain corresponds to 121–139 (DRFVAICHPLHYAKIMSLR). The chain crosses the membrane as a helical span at residues 140–158 (LCRLLVGALWAFSCFISLT). Residues 159–196 (HILLMARLVFCGSHEVPHYFCDLTPILRLSCTDTSVNR) are Extracellular-facing. A helical membrane pass occupies residues 197–219 (IFILIVAGMVIATPFVCILASYA). Residues 220 to 236 (RILVAIMKVPSAGGRKK) lie on the Cytoplasmic side of the membrane. A helical membrane pass occupies residues 237 to 259 (AFSTCSSHLSVVALFYGTTIGVY). The Extracellular portion of the chain corresponds to 260 to 272 (LCPSSVLTTVKEK). Residues 273-292 (ASAVMYTAVTPMLNPFIYSL) traverse the membrane as a helical segment. At 293-313 (RNRDLKGALRKLVNRKITSSS) the chain is on the cytoplasmic side.

Belongs to the G-protein coupled receptor 1 family.

The protein resides in the cell membrane. Odorant receptor. In Homo sapiens (Human), this protein is Olfactory receptor 1M1.